Here is a 243-residue protein sequence, read N- to C-terminus: Myelin protein P0 (243 aa).

The N-terminal stretch at 1 to 26 is a signal peptide; that stretch reads MESSGLRAPCSLLVLLSALVLPPTLA. Residues 27–141 enclose the Ig-like V-type domain; that stretch reads IEVYTDREVY…VGKSSYVHLQ (115 aa). The Extracellular portion of the chain corresponds to 27-154; it reads IEVYTDREVY…KGAARAGLVL (128 aa). Residues cysteine 47 and cysteine 123 are joined by a disulfide bond. Asparagine 118 is a glycosylation site (N-linked (GlcNAc...) asparagine). The helical transmembrane segment at 155–175 threads the bilayer; that stretch reads GIIIAVALALVIVVTILILLI. Over 176–243 the chain is Cytoplasmic; the sequence is RYCWLRRQVR…GIGDSRKDRK (68 aa). Residues 201-243 form a disordered region; it reads AKDSSKRSSRQTPILYAMLDQTRGKASEKKGKGGIGDSRKDRK. Basic and acidic residues predominate over residues 222–243; that stretch reads TRGKASEKKGKGGIGDSRKDRK.

This sequence belongs to the myelin P0 protein family.

The protein resides in the cell membrane. Creation of an extracellular membrane face which guides the wrapping process and ultimately compacts adjacent lamellae. The chain is Myelin protein P0 (mpz) from Xenopus tropicalis (Western clawed frog).